The chain runs to 371 residues: DNA replication and repair protein RecF (371 aa).

30–37 provides a ligand contact to ATP; it reads GSNGQGKT.

This sequence belongs to the RecF family.

It localises to the cytoplasm. In terms of biological role, the RecF protein is involved in DNA metabolism; it is required for DNA replication and normal SOS inducibility. RecF binds preferentially to single-stranded, linear DNA. It also seems to bind ATP. The sequence is that of DNA replication and repair protein RecF from Acidothermus cellulolyticus (strain ATCC 43068 / DSM 8971 / 11B).